The sequence spans 178 residues: Large ribosomal subunit protein uL6 (178 aa).

The protein belongs to the universal ribosomal protein uL6 family. In terms of assembly, part of the 50S ribosomal subunit.

Its function is as follows. This protein binds to the 23S rRNA, and is important in its secondary structure. It is located near the subunit interface in the base of the L7/L12 stalk, and near the tRNA binding site of the peptidyltransferase center. The chain is Large ribosomal subunit protein uL6 from Shouchella clausii (strain KSM-K16) (Alkalihalobacillus clausii).